We begin with the raw amino-acid sequence, 168 residues long: MQTPQYLQQRRKFAAAFLAFIFILAAVDTAEAGKKEKPEKKVKKSDCGEWQWSVCVPTSGDCGLGTREGTRTGAECKQTMKTQRCKIPCNWKKQFGAECKYQFQAWGECDLNTALKTRTGSLKRALHNADCQKTVTISKPCGKLTKSKPQAESKKKKKEGKKQEKMLD.

The first 32 residues, 1–32 (MQTPQYLQQRRKFAAAFLAFIFILAAVDTAEA), serve as a signal peptide directing secretion. 5 disulfide bridges follow: C47-C76, C55-C85, C62-C89, C99-C131, and C109-C141. Chondroitin sulfate binding regions lie at residues 92 to 99 (KKQFGAEC) and 123 to 131 (KRALHNADC). Positions 141–168 (CGKLTKSKPQAESKKKKKEGKKQEKMLD) are disordered. The chondroitin sulfate A binding stretch occupies residues 147–168 (SKPQAESKKKKKEGKKQEKMLD).

In terms of assembly, interacts with ALK and NEK6. Interacts with PTPRZ1 (via chondroitin sulfate groups); promotes formation of homooligomers; oligomerization impairs tyrosine phosphatase activity. Forms a complex with PTPRZ1 and CTNNB1; this complex inactivates PTPRZ1 protein tyrosine phosphatase activity through PTN interaction and stimulates tyrosine phosphorylation of CTNNB1. Interacts with ITGB3 and ITGA5. Forms a complex with PTPRZ1 and integrin alpha-V/beta-3 (ITGAV:ITGB3) that stimulates endothelial cell migration through ITGB3 'Tyr-773' phosphorylation. Interacts with SDC3 (via heparan sulfate chains); this interaction mediates the neurite outgrowth-promoting signal from PTN to the cytoskeleton of growing neurites; this interaction mediates osteoblast recruitment. Interacts with GPC2 (via heparan sulfate); this interaction promotes neurite outgrowth through binding of PTN with chondroitin sulfate of proteoglycans, thereby releasing PTPRS of chondroitin sulfate proteoglycans (CSPGs) and leading to binding with heparan sulfate of GPC2. Post-translationally, phosphorylated by NEK6.

It is found in the secreted. Functionally, secreted growth factor that mediates its signal through cell-surface proteoglycan and non-proteoglycan receptors. Binds cell-surface proteoglycan receptor via their chondroitin sulfate (CS) groups. Thereby regulates many processes like cell proliferation, cell survival, cell growth, cell differentiation and cell migration in several tissues namely neuron and bone. Also plays a role in synaptic plasticity and learning-related behavior by inhibiting long-term synaptic potentiation. Binds PTPRZ1, leading to neutralization of the negative charges of the CS chains of PTPRZ1, inducing PTPRZ1 clustering, thereby causing the dimerization and inactivation of its phosphatase activity leading to increased tyrosine phosphorylation of each of the PTPRZ1 substrates like ALK, CTNNB1 or AFAP1L2 in order to activate the PI3K-AKT pathway. Through PTPRZ1 binding controls oligodendrocyte precursor cell differentiation by enhancing the phosphorylation of AFAP1L2 in order to activate the PI3K-AKT pathway. Forms a complex with PTPRZ1 and integrin alpha-V/beta-3 (ITGAV:ITGB3) that stimulates endothelial cell migration through SRC dephosphorylation and activation that consequently leads to ITGB3 'Tyr-773' phosphorylation. In adult hippocampus promotes dendritic arborization, spine development, and functional integration and connectivity of newborn granule neurons through ALK by activating AKT signaling pathway. Binds GPC2 and chondroitin sulfate proteoglycans (CSPGs) at the neuron surface, leading to abrogation of binding between PTPRS and CSPGs and neurite outgrowth promotion. Binds SDC3 and mediates bone formation by recruiting and attaching osteoblasts/osteoblast precursors to the sites for new bone deposition. Binds ALK and promotes cell survival and cell proliferation through MAPK pathway activation. Inhibits proliferation and enhances differentiation of neural stem cells by inhibiting FGF2-induced fibroblast growth factor receptor signaling pathway. Mediates regulatory mechanisms in normal hemostasis and in hematopoietic regeneration and in maintaining the balance of myeloid and lymphoid regeneration. In addition may play a role in the female reproductive system, auditory response and the progesterone-induced decidualization pathway. The protein is Pleiotrophin of Bos taurus (Bovine).